The sequence spans 1203 residues: DNA-directed RNA polymerase subunit beta (1203 aa).

The segment covering 1174-1195 (AAQEAKAAFEAEEAEKATKAEA) has biased composition (basic and acidic residues). Positions 1174–1203 (AAQEAKAAFEAEEAEKATKAEATEEAAEQE) are disordered.

Belongs to the RNA polymerase beta chain family. In terms of assembly, the RNAP catalytic core consists of 2 alpha, 1 beta, 1 beta' and 1 omega subunit. When a sigma factor is associated with the core the holoenzyme is formed, which can initiate transcription.

The enzyme catalyses RNA(n) + a ribonucleoside 5'-triphosphate = RNA(n+1) + diphosphate. DNA-dependent RNA polymerase catalyzes the transcription of DNA into RNA using the four ribonucleoside triphosphates as substrates. This chain is DNA-directed RNA polymerase subunit beta, found in Streptococcus pneumoniae serotype 19F (strain G54).